A 66-amino-acid polypeptide reads, in one-letter code: Large ribosomal subunit protein uL29 (66 aa).

The protein belongs to the universal ribosomal protein uL29 family.

The chain is Large ribosomal subunit protein uL29 from Thermotoga neapolitana (strain ATCC 49049 / DSM 4359 / NBRC 107923 / NS-E).